A 190-amino-acid polypeptide reads, in one-letter code: RRP15-like protein (190 aa).

Basic and acidic residues predominate over residues 1–11 (MSTKNRDRLVV). Disordered stretches follow at residues 1–69 (MSTK…TRKE) and 119–190 (QKTM…SDED). A compositionally biased stretch (basic residues) spans 55–66 (QRKKKKVIKKLT). Residues 59–84 (KKVIKKLTRKEQSLKHSVKEYRIKLA) are a coiled coil. Over residues 119 to 153 (QKTMSDAVKEKMTARDRKEARERFDGKNFDSDKFA) the composition is skewed to basic and acidic residues. Positions 167 to 190 (GEEEDEQMNIGDDEIDAGNYSDED) are enriched in acidic residues.

It belongs to the RRP15 family.

The sequence is that of RRP15-like protein from Caenorhabditis briggsae.